The following is a 491-amino-acid chain: Sterol 14-alpha demethylase (491 aa).

A helical membrane pass occupies residues 20-40 (LWMLSTVALLSILVVSVVINV). Residue Cys-430 participates in heme binding.

It belongs to the cytochrome P450 family. Requires heme as cofactor.

It localises to the endoplasmic reticulum membrane. It catalyses the reaction a 14alpha-methyl steroid + 3 reduced [NADPH--hemoprotein reductase] + 3 O2 = a Delta(14) steroid + formate + 3 oxidized [NADPH--hemoprotein reductase] + 4 H2O + 4 H(+). It carries out the reaction a 14alpha-methyl steroid + reduced [NADPH--hemoprotein reductase] + O2 = a 14alpha-hydroxymethyl steroid + oxidized [NADPH--hemoprotein reductase] + H2O + H(+). The enzyme catalyses a 14alpha-hydroxymethyl steroid + reduced [NADPH--hemoprotein reductase] + O2 = a 14alpha-formyl steroid + oxidized [NADPH--hemoprotein reductase] + 2 H2O + H(+). The catalysed reaction is a 14alpha-formyl steroid + reduced [NADPH--hemoprotein reductase] + O2 = a Delta(14) steroid + formate + oxidized [NADPH--hemoprotein reductase] + H2O + 2 H(+). It catalyses the reaction lanosterol + 3 reduced [NADPH--hemoprotein reductase] + 3 O2 = 4,4-dimethyl-5alpha-cholesta-8,14,24-trien-3beta-ol + formate + 3 oxidized [NADPH--hemoprotein reductase] + 4 H2O + 4 H(+). It carries out the reaction lanosterol + reduced [NADPH--hemoprotein reductase] + O2 = 32-hydroxylanosterol + oxidized [NADPH--hemoprotein reductase] + H2O + H(+). The enzyme catalyses 32-hydroxylanosterol + reduced [NADPH--hemoprotein reductase] + O2 = 32-oxolanosterol + oxidized [NADPH--hemoprotein reductase] + 2 H2O + H(+). The catalysed reaction is 32-oxolanosterol + reduced [NADPH--hemoprotein reductase] + O2 = 4,4-dimethyl-5alpha-cholesta-8,14,24-trien-3beta-ol + formate + oxidized [NADPH--hemoprotein reductase] + H2O + 2 H(+). It catalyses the reaction eburicol + 3 reduced [NADPH--hemoprotein reductase] + 3 O2 = 14-demethyleburicol + formate + 3 oxidized [NADPH--hemoprotein reductase] + 4 H2O + 4 H(+). It carries out the reaction eburicol + reduced [NADPH--hemoprotein reductase] + O2 = 32-hydroxyeburicol + oxidized [NADPH--hemoprotein reductase] + H2O + H(+). The enzyme catalyses 32-hydroxyeburicol + reduced [NADPH--hemoprotein reductase] + O2 = 32-oxoeburicol + oxidized [NADPH--hemoprotein reductase] + 2 H2O + H(+). The catalysed reaction is 32-oxoeburicol + reduced [NADPH--hemoprotein reductase] + O2 = 14-demethyleburicol + formate + oxidized [NADPH--hemoprotein reductase] + H2O + 2 H(+). The protein operates within steroid biosynthesis; sterol biosynthesis. Functionally, sterol 14alpha-demethylase, encoded by cyp51A, cyp51B and cyp51C, that plays a critical role in the third module of ergosterol biosynthesis pathway, being ergosterol the major sterol component in fungal membranes that participates in a variety of functions. The third module or late pathway involves the ergosterol synthesis itself through consecutive reactions that mainly occur in the endoplasmic reticulum (ER) membrane. In filamentous fungi, during the initial step of this module, lanosterol (lanosta-8,24-dien-3beta-ol) can be metabolized to eburicol. Sterol 14alpha-demethylase catalyzes the three-step oxidative removal of the 14alpha-methyl group (C-32) of both these sterols in the form of formate, and converts eburicol and lanosterol to 14-demethyleburicol (4,4,24-trimethylergosta-8,14,24(28)-trienol) and 4,4-dimethyl-5alpha-cholesta-8,14,24-trien-3beta-ol, respectively, which are further metabolized by other enzymes in the pathway to ergosterol. Can also use substrates not intrinsic to fungi, such as 24,25-dihydrolanosterol (DHL), producing 4,4'-dimethyl-8,14-cholestadien-3-beta-ol, but at lower rates than the endogenous substrates. In terms of biological role, as a target of azole drugs, plays a crucial role in azole susceptibility. The protein is Sterol 14-alpha demethylase of Aspergillus flavus (strain ATCC 200026 / FGSC A1120 / IAM 13836 / NRRL 3357 / JCM 12722 / SRRC 167).